Consider the following 128-residue polypeptide: Sulfurtransferase TusD (128 aa).

Cys-78 (cysteine persulfide intermediate) is an active-site residue.

The protein belongs to the DsrE/TusD family. As to quaternary structure, heterohexamer, formed by a dimer of trimers. The hexameric TusBCD complex contains 2 copies each of TusB, TusC and TusD. The TusBCD complex interacts with TusE.

Its subcellular location is the cytoplasm. In terms of biological role, part of a sulfur-relay system required for 2-thiolation of 5-methylaminomethyl-2-thiouridine (mnm(5)s(2)U) at tRNA wobble positions. Accepts sulfur from TusA and transfers it in turn to TusE. The protein is Sulfurtransferase TusD of Salmonella typhi.